The primary structure comprises 128 residues: Probable 4-amino-4-deoxy-L-arabinose-phosphoundecaprenol flippase subunit ArnF (128 aa).

Residues Met-1 to Gly-5 lie on the Cytoplasmic side of the membrane. The chain crosses the membrane as a helical span at residues Trp-6–Met-26. Over Asn-27 to Gln-47 the chain is Periplasmic. Residues Phe-48–Ala-68 traverse the membrane as a helical segment. Residues Leu-69–Ala-77 lie on the Cytoplasmic side of the membrane. A helical transmembrane segment spans residues Tyr-78–Phe-98. Residues Ser-99–Ser-101 are Periplasmic-facing. A helical membrane pass occupies residues Ala-102–Thr-122. At Lys-123 to Asp-128 the chain is on the cytoplasmic side.

It belongs to the ArnF family. In terms of assembly, heterodimer of ArnE and ArnF.

It localises to the cell inner membrane. The protein operates within bacterial outer membrane biogenesis; lipopolysaccharide biosynthesis. Translocates 4-amino-4-deoxy-L-arabinose-phosphoundecaprenol (alpha-L-Ara4N-phosphoundecaprenol) from the cytoplasmic to the periplasmic side of the inner membrane. The protein is Probable 4-amino-4-deoxy-L-arabinose-phosphoundecaprenol flippase subunit ArnF of Yersinia enterocolitica serotype O:8 / biotype 1B (strain NCTC 13174 / 8081).